We begin with the raw amino-acid sequence, 178 residues long: Crossover junction endodeoxyribonuclease RuvC (178 aa).

Active-site residues include Asp-8, Glu-72, and Asp-144. Asp-8, Glu-72, and Asp-144 together coordinate Mg(2+).

The protein belongs to the RuvC family. As to quaternary structure, homodimer which binds Holliday junction (HJ) DNA. The HJ becomes 2-fold symmetrical on binding to RuvC with unstacked arms; it has a different conformation from HJ DNA in complex with RuvA. In the full resolvosome a probable DNA-RuvA(4)-RuvB(12)-RuvC(2) complex forms which resolves the HJ. Requires Mg(2+) as cofactor.

It localises to the cytoplasm. It catalyses the reaction Endonucleolytic cleavage at a junction such as a reciprocal single-stranded crossover between two homologous DNA duplexes (Holliday junction).. In terms of biological role, the RuvA-RuvB-RuvC complex processes Holliday junction (HJ) DNA during genetic recombination and DNA repair. Endonuclease that resolves HJ intermediates. Cleaves cruciform DNA by making single-stranded nicks across the HJ at symmetrical positions within the homologous arms, yielding a 5'-phosphate and a 3'-hydroxyl group; requires a central core of homology in the junction. The consensus cleavage sequence is 5'-(A/T)TT(C/G)-3'. Cleavage occurs on the 3'-side of the TT dinucleotide at the point of strand exchange. HJ branch migration catalyzed by RuvA-RuvB allows RuvC to scan DNA until it finds its consensus sequence, where it cleaves and resolves the cruciform DNA. The chain is Crossover junction endodeoxyribonuclease RuvC from Idiomarina loihiensis (strain ATCC BAA-735 / DSM 15497 / L2-TR).